The chain runs to 481 residues: Glycogen synthase (481 aa).

Lys16 serves as a coordination point for ADP-alpha-D-glucose.

It belongs to the glycosyltransferase 1 family. Bacterial/plant glycogen synthase subfamily.

The catalysed reaction is [(1-&gt;4)-alpha-D-glucosyl](n) + ADP-alpha-D-glucose = [(1-&gt;4)-alpha-D-glucosyl](n+1) + ADP + H(+). It functions in the pathway glycan biosynthesis; glycogen biosynthesis. Synthesizes alpha-1,4-glucan chains using ADP-glucose. The chain is Glycogen synthase from Lacticaseibacillus casei (strain BL23) (Lactobacillus casei).